We begin with the raw amino-acid sequence, 158 residues long: Probable inactive acireductone dioxygenase 2 (158 aa).

This sequence belongs to the acireductone dioxygenase (ARD) family.

The protein localises to the cytoplasm. It is found in the nucleus. Its function is as follows. Probable inactive acireductone dioxygenase. In Caenorhabditis elegans, this protein is Probable inactive acireductone dioxygenase 2.